The chain runs to 389 residues: Mannuronan synthase (389 aa).

In terms of domain architecture, PilZ spans 16-116 (QRQFARVKLP…EVAALRYLIT (101 aa)).

Belongs to the Alg44 family.

It is found in the periplasm. It catalyses the reaction [(1-&gt;4)-beta-D-mannuronosyl](n) + GDP-alpha-D-mannuronate = [(1-&gt;4)-beta-D-mannuronosyl](n+1) + GDP + H(+). It functions in the pathway glycan biosynthesis; alginate biosynthesis. Functionally, required for alginate biosynthesis. This chain is Mannuronan synthase (alg44), found in Pseudomonas aeruginosa (strain ATCC 15692 / DSM 22644 / CIP 104116 / JCM 14847 / LMG 12228 / 1C / PRS 101 / PAO1).